The primary structure comprises 790 residues: Ribosome biogenesis protein ERB1 (790 aa).

Positions 1-93 are disordered; the sequence is MAKKNTVTGS…SDELQDDSNS (93 aa). Acidic residues predominate over residues 20–89; that stretch reads SPEVSESEEI…SEDFSDELQD (70 aa). Positions 255–371 are required for interaction with NOP7; that stretch reads RFVPSKHEAK…LRKVPAYQEN (117 aa). The tract at residues 371–407 is required for interaction with YTM1; the sequence is NLRERFERSLDLYLAPRVRHNKLNIDPDSLIPDLPSP. WD repeat units lie at residues 423–462, 470–510, 574–616, 619–657, 660–699, 703–743, and 759–790; these read GHIG…QVYH, KDDD…YEIE, QCRK…SQSP, KSKG…LTKK, PGAR…TPYK, YHEK…DLMT, and VHSL…LWTT.

Belongs to the WD repeat BOP1/ERB1 family. In terms of assembly, component of the NOP7 complex, composed of ERB1, NOP7 and YTM1. The complex is held together by ERB1, which interacts with NOP7 via its N-terminal domain and with YTM1 via a high-affinity interaction between the seven-bladed beta-propeller domains of the 2 proteins. The NOP7 complex associates with the 66S pre-ribosome.

It is found in the nucleus. It localises to the nucleolus. The protein localises to the nucleoplasm. Component of the NOP7 complex, which is required for maturation of the 25S and 5.8S ribosomal RNAs and formation of the 60S ribosome. This Meyerozyma guilliermondii (strain ATCC 6260 / CBS 566 / DSM 6381 / JCM 1539 / NBRC 10279 / NRRL Y-324) (Yeast) protein is Ribosome biogenesis protein ERB1.